A 34-amino-acid chain; its full sequence is Photosystem II reaction center protein M (34 aa).

The helical transmembrane segment at 7–27 (GFVASLLFILVPAIFLIVLYI) threads the bilayer.

This sequence belongs to the PsbM family. As to quaternary structure, PSII is composed of 1 copy each of membrane proteins PsbA, PsbB, PsbC, PsbD, PsbE, PsbF, PsbH, PsbI, PsbJ, PsbK, PsbL, PsbM, PsbT, PsbX, PsbY, PsbZ, Psb30/Ycf12, peripheral proteins PsbO, CyanoQ (PsbQ), PsbU, PsbV and a large number of cofactors. It forms dimeric complexes.

It localises to the cellular thylakoid membrane. One of the components of the core complex of photosystem II (PSII). PSII is a light-driven water:plastoquinone oxidoreductase that uses light energy to abstract electrons from H(2)O, generating O(2) and a proton gradient subsequently used for ATP formation. It consists of a core antenna complex that captures photons, and an electron transfer chain that converts photonic excitation into a charge separation. This subunit is found at the monomer-monomer interface. This Parasynechococcus marenigrum (strain WH8102) protein is Photosystem II reaction center protein M.